Here is a 467-residue protein sequence, read N- to C-terminus: Probable protein phosphatase 2C 6 (467 aa).

The disordered stretch occupies residues 61–81 (VEDDAVAPGRGEEGGEASAVG). The PPM-type phosphatase domain maps to 149–457 (LWGHKSICGR…DNISVIVVDL (309 aa)). D205, G206, D386, and D448 together coordinate Mn(2+).

It belongs to the PP2C family. As to quaternary structure, interacts with PYL9. It depends on Mg(2+) as a cofactor. Requires Mn(2+) as cofactor.

It is found in the nucleus. Its subcellular location is the cytoplasm. The protein localises to the cytosol. It catalyses the reaction O-phospho-L-seryl-[protein] + H2O = L-seryl-[protein] + phosphate. The catalysed reaction is O-phospho-L-threonyl-[protein] + H2O = L-threonyl-[protein] + phosphate. Probable protein phosphatase that may function in abscisic acid (ABA) signaling. The chain is Probable protein phosphatase 2C 6 from Oryza sativa subsp. japonica (Rice).